The sequence spans 388 residues: Quinolone resistance protein NorA (388 aa).

Transmembrane regions (helical) follow at residues 5–25, 42–62, 69–89, 99–119, 129–149, 157–177, 201–221, 239–259, 269–289, 293–313, 331–351, and 355–375; these read IFVLYFNIFLIFLGIGLVIPV, LLVAAFALSQMIISPFGGTLA, LIICIGLILFSVSEFMFAVGH, VIGGMSAGMVMPGVTGLIADV, FGYMSAIINSGFILGPGIGGF, MPFYFAGALGILAFIMSVVLI, WKVFITPAILTLVLAFGLSAF, DISIAITGGGIFGALFQIYFF, LTFIAWSLIYSVIVLVLLVIA, WTIMVISFAVFIGFDMIRPAI, LNSTFTSMGNFIGPLIAGALF, and IEAPIYMAIGVSLAGVVIVLI.

The protein belongs to the major facilitator superfamily. TCR/Tet family.

It is found in the cell membrane. Involved in quinolone resistance. May constitute a membrane-associated active efflux pump of hydrophilic quinolones. This chain is Quinolone resistance protein NorA (norA), found in Staphylococcus aureus (strain MRSA252).